The chain runs to 487 residues: ATP-dependent rRNA helicase RRP3 (487 aa).

The disordered stretch occupies residues 22–67 (IKRKALEKQQQAHANEPSPSDEDSAQSNSKDSNSNEQPEESEEIFE). A Q motif motif is present at residues 67–95 (ESFTELDLVPELIEACKNLNYNKPTPIQS). Residues 98-270 (IPPALKGSDI…RASLTNPVKC (173 aa)) enclose the Helicase ATP-binding domain. 111 to 118 (AQTGSGKT) lines the ATP pocket. The DEAD box motif lies at 217-220 (DEAD). Residues 298–442 (LIYLLNEFIG…ENVDKDAILA (145 aa)) enclose the Helicase C-terminal domain. Residues 459–487 (NRRNKEKQARGKGRRGRMATRDNMDREER) form a disordered region. The span at 477-487 (ATRDNMDREER) shows a compositional bias: basic and acidic residues.

Belongs to the DEAD box helicase family. DDX47/RRP3 subfamily. As to quaternary structure, interacts with the SSU processome.

Its subcellular location is the nucleus. The catalysed reaction is ATP + H2O = ADP + phosphate + H(+). ATP-dependent rRNA helicase required for pre-ribosomal RNA processing. Involved in the maturation of the 35S-pre-rRNA and to its cleavage to mature 18S rRNA. This chain is ATP-dependent rRNA helicase RRP3, found in Kluyveromyces lactis (strain ATCC 8585 / CBS 2359 / DSM 70799 / NBRC 1267 / NRRL Y-1140 / WM37) (Yeast).